Here is a 369-residue protein sequence, read N- to C-terminus: Carbamoyl phosphate synthase small chain (369 aa).

Residues 1–168 (MYGILVLEDG…KKVVKYPAKD (168 aa)) form a CPSase region. The L-glutamine site is built by serine 45, glycine 220, and glycine 222. The 193-residue stretch at 172–364 (SCVVIDCGVK…VALGMKFKQE (193 aa)) folds into the Glutamine amidotransferase type-1 domain. Cysteine 247 (nucleophile) is an active-site residue. Leucine 248, glutamine 251, asparagine 289, glycine 291, and phenylalanine 292 together coordinate L-glutamine. Catalysis depends on residues histidine 337 and glutamate 339.

The protein belongs to the CarA family. As to quaternary structure, composed of two chains; the small (or glutamine) chain promotes the hydrolysis of glutamine to ammonia, which is used by the large (or ammonia) chain to synthesize carbamoyl phosphate. Tetramer of heterodimers (alpha,beta)4.

It catalyses the reaction hydrogencarbonate + L-glutamine + 2 ATP + H2O = carbamoyl phosphate + L-glutamate + 2 ADP + phosphate + 2 H(+). The catalysed reaction is L-glutamine + H2O = L-glutamate + NH4(+). It functions in the pathway amino-acid biosynthesis; L-arginine biosynthesis; carbamoyl phosphate from bicarbonate: step 1/1. Its pathway is pyrimidine metabolism; UMP biosynthesis via de novo pathway; (S)-dihydroorotate from bicarbonate: step 1/3. Small subunit of the glutamine-dependent carbamoyl phosphate synthetase (CPSase). CPSase catalyzes the formation of carbamoyl phosphate from the ammonia moiety of glutamine, carbonate, and phosphate donated by ATP, constituting the first step of 2 biosynthetic pathways, one leading to arginine and/or urea and the other to pyrimidine nucleotides. The small subunit (glutamine amidotransferase) binds and cleaves glutamine to supply the large subunit with the substrate ammonia. This is Carbamoyl phosphate synthase small chain from Methanococcus vannielii (strain ATCC 35089 / DSM 1224 / JCM 13029 / OCM 148 / SB).